The chain runs to 198 residues: Small ribosomal subunit protein uS4c (198 aa).

The 61-residue stretch at 85 to 145 (LRLDATIFRL…PKKFTIILIC (61 aa)) folds into the S4 RNA-binding domain.

It belongs to the universal ribosomal protein uS4 family. In terms of assembly, part of the 30S ribosomal subunit.

Its subcellular location is the plastid. The protein resides in the apicoplast. In terms of biological role, one of the primary rRNA binding proteins, it binds directly to 16S rRNA where it nucleates assembly of the body of the 30S subunit. This Toxoplasma gondii protein is Small ribosomal subunit protein uS4c (rps4).